We begin with the raw amino-acid sequence, 673 residues long: Fatty acyl-CoA synthetase B (673 aa).

A signal peptide spans Met-1–Ala-18. N-linked (GlcNAc...) asparagine glycosylation is present at Asn-267.

The protein belongs to the ATP-dependent AMP-binding enzyme family.

It is found in the endoplasmic reticulum. The enzyme catalyses a long-chain fatty acid + ATP + CoA = a long-chain fatty acyl-CoA + AMP + diphosphate. In terms of biological role, long chain fatty acid acyl-CoA synthetases catalyze the formation of a thiester bond between a free fatty acid and coenzyme A during fatty acid metabolic process. This Dictyostelium discoideum (Social amoeba) protein is Fatty acyl-CoA synthetase B (fcsB).